The primary structure comprises 188 residues: Putative manganese efflux pump MntP (188 aa).

The next 6 helical transmembrane spans lie at 2–22 (IMGN…AFAV), 39–59 (LITG…GFLL), 67–87 (ITAI…LNMI), 107–127 (IILS…FAFL), 129–149 (VDIV…SFLG), and 166–186 (LAGG…HLGF).

This sequence belongs to the MntP (TC 9.B.29) family.

It is found in the cell membrane. Functionally, probably functions as a manganese efflux pump. In Desulfitobacterium hafniense (strain Y51), this protein is Putative manganese efflux pump MntP.